The chain runs to 256 residues: MEIIPAIDLLQGSCVRLHQGDYDQVTRFSDDPLAQAQQWVKQGATRLHLVDLDGARSGQPINDQAVRLIAKELSIPVQLGGGVRSLERAEELLSCGLDRVILGTVAIENPELVMELASRHPHKIVVGIDARNGFVATRGWVEESEVEATALAQRLSKAGIAAIISTDIATDGTLAGPNLEALRAMAQASEVPVIASGGVGCMADLLSLLALEPLGVEGVIVGRALYDGRVDLHEAIQAIAEGRLQDPLSDQSRTIA.

The active-site Proton acceptor is the aspartate 8. Aspartate 129 (proton donor) is an active-site residue.

Belongs to the HisA/HisF family.

It localises to the cytoplasm. It carries out the reaction 1-(5-phospho-beta-D-ribosyl)-5-[(5-phospho-beta-D-ribosylamino)methylideneamino]imidazole-4-carboxamide = 5-[(5-phospho-1-deoxy-D-ribulos-1-ylimino)methylamino]-1-(5-phospho-beta-D-ribosyl)imidazole-4-carboxamide. It participates in amino-acid biosynthesis; L-histidine biosynthesis; L-histidine from 5-phospho-alpha-D-ribose 1-diphosphate: step 4/9. The chain is 1-(5-phosphoribosyl)-5-[(5-phosphoribosylamino)methylideneamino] imidazole-4-carboxamide isomerase from Synechococcus sp. (strain CC9311).